Here is a 236-residue protein sequence, read N- to C-terminus: uncharacterized protein (236 aa).

The region spanning 7–74 (RTNRRDIYLK…PKIGSFVSRV (68 aa)) is the HTH gntR-type domain. Residues 34-53 (ENELAASMGVSRTPVRESLI) constitute a DNA-binding region (H-T-H motif).

This is an uncharacterized protein from Streptomyces ambofaciens.